Here is a 454-residue protein sequence, read N- to C-terminus: Ornithine aminotransferase (454 aa).

Residue Lys-280 is modified to N6-(pyridoxal phosphate)lysine.

This sequence belongs to the class-III pyridoxal-phosphate-dependent aminotransferase family. Requires pyridoxal 5'-phosphate as cofactor.

Its subcellular location is the cytoplasm. The catalysed reaction is a 2-oxocarboxylate + L-ornithine = L-glutamate 5-semialdehyde + an L-alpha-amino acid. It participates in amino-acid biosynthesis; L-proline biosynthesis; L-glutamate 5-semialdehyde from L-ornithine: step 1/1. This chain is Ornithine aminotransferase (otaA), found in Emericella nidulans (strain FGSC A4 / ATCC 38163 / CBS 112.46 / NRRL 194 / M139) (Aspergillus nidulans).